Reading from the N-terminus, the 371-residue chain is 4-hydroxy-3-methylbut-2-en-1-yl diphosphate synthase (flavodoxin) (371 aa).

[4Fe-4S] cluster contacts are provided by cysteine 269, cysteine 272, cysteine 304, and glutamate 311.

This sequence belongs to the IspG family. It depends on [4Fe-4S] cluster as a cofactor.

It catalyses the reaction (2E)-4-hydroxy-3-methylbut-2-enyl diphosphate + oxidized [flavodoxin] + H2O + 2 H(+) = 2-C-methyl-D-erythritol 2,4-cyclic diphosphate + reduced [flavodoxin]. It participates in isoprenoid biosynthesis; isopentenyl diphosphate biosynthesis via DXP pathway; isopentenyl diphosphate from 1-deoxy-D-xylulose 5-phosphate: step 5/6. In terms of biological role, converts 2C-methyl-D-erythritol 2,4-cyclodiphosphate (ME-2,4cPP) into 1-hydroxy-2-methyl-2-(E)-butenyl 4-diphosphate. The polypeptide is 4-hydroxy-3-methylbut-2-en-1-yl diphosphate synthase (flavodoxin) (Acinetobacter baumannii (strain AB307-0294)).